The following is a 616-amino-acid chain: ATP-dependent RNA helicase VAD1 (616 aa).

The segment at 1-35 is disordered; it reads MASSSTLANDDWKQGLAAPPKDLRPQTEDVTATQG. The short motif at 36–64 is the Q motif element; sequence SRFEDFGLRRELLMGIYTAGFERPSPIQE. The Helicase ATP-binding domain occupies 67 to 238; that stretch reads IPMALTGRDI…DQHMVQPYEI (172 aa). ATP is bound at residue 80–87; that stretch reads AKNGTGKT. Positions 186–189 match the DEAD box motif; sequence DEAD. Residues 248–408 enclose the Helicase C-terminal domain; the sequence is GVTQYYAYVE…PIPAVIDPVL (161 aa). The disordered stretch occupies residues 416–616; that stretch reads EEERESPPPK…GASQSQQAQA (201 aa). 3 stretches are compositionally biased toward low complexity: residues 427–441, 458–500, and 508–523; these read AAIA…PQQR, PAAA…NSSP, and YPQQ…AQMQ. The segment covering 529–545 has biased composition (polar residues); that stretch reads PATQPQASAQIPVQGQT. Low complexity-rich tracts occupy residues 550-579 and 606-616; these read PRAQ…PNTG and AGASQSQQAQA.

The protein belongs to the DEAD box helicase family. DDX6/DHH1 subfamily.

It localises to the cytoplasm. Its subcellular location is the P-body. It carries out the reaction ATP + H2O = ADP + phosphate + H(+). ATP-dependent RNA helicase involved in mRNA turnover, and more specifically in mRNA decapping. Is involved in G1/S DNA-damage checkpoint recovery, probably through the regulation of the translational status of a subset of mRNAs. May also have a role in translation and mRNA nuclear export. Blocks autophagy in nutrient-rich conditions by, at least partly, binding and repressing the expression of a set of ATG genes, including ATG3, ATG7, ATG8, ATG19, ATG20 and ATG22. VAD1-mediated repression of autophagy is regulated by TOR-dependent phosphorylation of the decapping enzyme DCP2. Regulates multiple virulence-associated genes. Repression of autophagy by VAD1 also regulates the pathogenesis. The sequence is that of ATP-dependent RNA helicase VAD1 from Cryptococcus neoformans var. grubii serotype A (strain H99 / ATCC 208821 / CBS 10515 / FGSC 9487) (Filobasidiella neoformans var. grubii).